We begin with the raw amino-acid sequence, 241 residues long: MNRCWALFLPLCCYLRLVSAEGDPIPEELYEMLSDHSIRSFDDLQRLLHRDSVDEDGAELDLNMTRAHSGVELESSSRGRRSLGSLAAAEPAVIAECKTRTEVFQISRNLIDRTNANFLVWPPCVEVQRCSGCCNNRNVQCRASQVQMRPVQVRKIEIVRKKPIFKKATVTLEDHLACKCETIVTPRPVTRSPGTSREQRAKTPQARVTIRTVRIRRPPKGKHRKFKHTHDKAALKETLGA.

A signal peptide spans 1–20; that stretch reads MNRCWALFLPLCCYLRLVSA. A propeptide spans 21–81 (removed in mature form); the sequence is EGDPIPEELY…ELESSSRGRR (61 aa). N-linked (GlcNAc...) asparagine glycosylation is present at N63. 3 disulfide bridges follow: C97-C141, C130-C178, and C134-C180. The propeptide at 191–241 is removed in mature form; the sequence is RSPGTSREQRAKTPQARVTIRTVRIRRPPKGKHRKFKHTHDKAALKETLGA. A compositionally biased stretch (basic residues) spans 217–230; sequence RPPKGKHRKFKHTH. The tract at residues 217–241 is disordered; sequence RPPKGKHRKFKHTHDKAALKETLGA.

This sequence belongs to the PDGF/VEGF growth factor family. In terms of assembly, antiparallel homodimer; disulfide-linked. Antiparallel heterodimer with PDGFA; disulfide-linked. The PDGFB homodimer interacts with PDGFRA and PDGFRB homodimers, and with heterodimers formed by PDGFRA and PDGFRB. The heterodimer composed of PDGFA and PDGFB interacts with PDGFRB homodimers, and with heterodimers formed by PDGFRA and PDGFRB. Interacts with XLKD1. Interacts with LRP1. Interacts with SORL1 (via the N-terminal ectodomain). Interacts with CD82; this interaction inhibits PDGFB-mediated signaling pathway. As to expression, localized to vascular smooth muscle cells. Also weakly expressed by cortical interstitial cells but absent in tubules. Up-regulated in areas of renal fibrosis. In mice with unilateral ureteral obstruction, an increased expression in interstitial cells and in some tubules observed after day 4.

It localises to the secreted. Its function is as follows. Growth factor that plays an essential role in the regulation of embryonic development, cell proliferation, cell migration, survival and chemotaxis. Potent mitogen for cells of mesenchymal origin. Required for normal proliferation and recruitment of pericytes and vascular smooth muscle cells in the central nervous system, skin, lung, heart and placenta. Required for normal blood vessel development, and for normal development of kidney glomeruli. Plays an important role in wound healing. Signaling is modulated by the formation of heterodimers with PDGFA. The sequence is that of Platelet-derived growth factor subunit B (Pdgfb) from Mus musculus (Mouse).